The following is a 641-amino-acid chain: Chaperone protein DnaK (641 aa).

At Thr199 the chain carries Phosphothreonine; by autocatalysis. Residues 602-641 (MYADQADQAQQAGGQEEGQAKSADDAVDAEFEEVKDDDKK) are disordered. Residues 604-615 (ADQADQAQQAGG) are compositionally biased toward low complexity. Acidic residues predominate over residues 626-641 (DAVDAEFEEVKDDDKK).

This sequence belongs to the heat shock protein 70 family.

Its function is as follows. Acts as a chaperone. This chain is Chaperone protein DnaK, found in Marinobacter nauticus (strain ATCC 700491 / DSM 11845 / VT8) (Marinobacter aquaeolei).